Reading from the N-terminus, the 1175-residue chain is MAQVEDYSSLHRLRKNSEILSNANKILVANRGEIPIRIFRSAHELSMQTVAIYSHEDRLSMHRLKADEAYVIGARGQYSPVQAYLQIDEIINIALEHNVSMIHPGYGFLSENSEFARKVEDSGMIWIGPPHNVIDAVGDKVSARNLAGKCNVPVVPGTDGPIDSVEQAQEFVDKYGYPVIIKAAFGGGGRGMRVVREGESIADAFQRATSEAKTAFGNGTCFIERFLDKPKHIEVQLLADNYGNVIHLFERDCSVQRRHQKVVEIAPAKTLPVEVRDAILTDAVKLAKAANYRNAGTAEFLVDNQNRHYFIEINPRIQVEHTITEEVTGVDIVAAQIQIAAGASLQQLGLLQDKITTRGFAIQCRITTEDPAKNFQPDTGKIEVYRSSGGNGVRLDGGNGFAGAIISPHYDSMLVKCSTSGSNYEIARRKMIRALVEFRIRGVKTNIPFLLALLTHPTFVSGDCWTTFIDDTPSLFEMVQSKNRAQKLLSYLADLCVNGSSIKGQIGLPKLTRDADIPVIHDINGWDIDIKNTPPPESFRQYLLDYGPEQFANQIRAFDGCLIMDTTWRDAHQSLLATRVRTIDLLNIAPATAHAFRYAFALECWGGATFDVAMRFLHEDPWDRLRKLRKAVPNIPFQMLLRGANGVAYSSLPDNAIDHFVKQAKDAGVDIFRVFDALNDLEQLKVGVDAVKKAGGVVEATVCYSGDMLKPGKKYNLKYYLETVDKIMEMGTHLLGIKDMAGTLKPAAAKLLISSIRKKYPSVPIHVHTHDSAGTGVITYVACALAGADVVDCAVNSMSGLTSQPSMSAFIAALDNEINTGITEQNAREIDAYWSEMRLLYSCFEADLKGPDPEVYNHEIPGGQLTNLLFQAQQVGLGEKWLETKKAYEEANMLLGDIVKVTPTSKVVGDLAQFMVSNKLSPKDVERLASELDFPDSVLDFFEGLMGTPYGGFPEPLRTNILAGKRRKLTRRPGLELEPFDLKKIKEELQSRFGNSITECDVASYNMYPKVFESFKKIQEKYGDLSVLPTRFFLAPPKLNEEISVEIEQGKTFVIKVMAIGDLSPQTGTREVYFEFNGEMRKVTVEDKLAAVETVTRPKADAHNPNEVGAPMAGVVIEVRVHPGVEVKKGDPLCVLSAMKMEMVISSPVSGRVGEVIVHENDSVDAGDLICKITK.

The region spanning 22–474 is the Biotin carboxylation domain; sequence NANKILVANR…WTTFIDDTPS (453 aa). 3 residues coordinate ATP: Lys140, Glu224, and His259. Residues 144-341 form the ATP-grasp domain; the sequence is RNLAGKCNVP…IVAAQIQIAA (198 aa). The active site involves Arg316. In terms of domain architecture, Pyruvate carboxyltransferase spans 561-828; sequence CLIMDTTWRD…NTGITEQNAR (268 aa). Substrate is bound by residues 569 to 573 and Arg642; that span reads RDAHQ. Asp570 serves as a coordination point for a divalent metal cation. A divalent metal cation contacts are provided by Lys738, His768, and His770. Lys738 carries the N6-carboxylysine modification. A substrate-binding site is contributed by Thr902. The region spanning 1099-1174 is the Biotinyl-binding domain; sequence KADAHNPNEV…DAGDLICKIT (76 aa). An N6-biotinyllysine modification is found at Lys1140.

It depends on biotin as a cofactor. Zn(2+) serves as cofactor.

The protein resides in the cytoplasm. The catalysed reaction is hydrogencarbonate + pyruvate + ATP = oxaloacetate + ADP + phosphate + H(+). It participates in carbohydrate biosynthesis; gluconeogenesis. Functionally, pyruvate carboxylase catalyzes a 2-step reaction, involving the ATP-dependent carboxylation of the covalently attached biotin in the first step and the transfer of the carboxyl group to pyruvate in the second. The polypeptide is Pyruvate carboxylase (PYC) (Pichia angusta (Yeast)).